The chain runs to 453 residues: Dibenzothiophene-sulfone monooxygenase (453 aa).

FMN contacts are provided by aspartate 59, threonine 106, histidine 156, tyrosine 160, and serine 231.

Belongs to the NtaA/SnaA/DszA monooxygenase family. Homodimer.

Its subcellular location is the cytoplasm. The catalysed reaction is dibenzothiophene 5,5-dioxide + FMNH2 + NADH + O2 = 2'-hydroxybiphenyl-2-sulfinate + FMN + NAD(+) + H2O + H(+). It participates in sulfur metabolism; dibenzothiophene degradation. Catalyzes the second step of the '4S' desulfurization pathway that removes covalently bound sulfur from dibenzothiophene (DBT) without breaking carbon-carbon bonds. Metabolizes DBT-sulfone (DBTO2 or DBT 5,5-dioxide) to 2-(2'-hydroxyphenyl)benzene sulphinate (HBPS). This Rhodococcus erythropolis (Arthrobacter picolinophilus) protein is Dibenzothiophene-sulfone monooxygenase.